Here is a 185-residue protein sequence, read N- to C-terminus: Potassium-transporting ATPase KdpC subunit (185 aa).

Residues 11 to 31 (LALLMTLVTGALYPLAVTGIA) traverse the membrane as a helical segment.

This sequence belongs to the KdpC family. The system is composed of three essential subunits: KdpA, KdpB and KdpC.

It localises to the cell inner membrane. Functionally, part of the high-affinity ATP-driven potassium transport (or Kdp) system, which catalyzes the hydrolysis of ATP coupled with the electrogenic transport of potassium into the cytoplasm. This subunit acts as a catalytic chaperone that increases the ATP-binding affinity of the ATP-hydrolyzing subunit KdpB by the formation of a transient KdpB/KdpC/ATP ternary complex. This is Potassium-transporting ATPase KdpC subunit from Pseudomonas putida (strain ATCC 47054 / DSM 6125 / CFBP 8728 / NCIMB 11950 / KT2440).